The sequence spans 260 residues: ATP-dependent zinc metalloprotease FTSH, chloroplastic (260 aa).

His219 is a binding site for Zn(2+). Residue Glu220 is part of the active site. Residue His223 participates in Zn(2+) binding.

In the N-terminal section; belongs to the AAA ATPase family. The protein in the C-terminal section; belongs to the peptidase M41 family. It depends on Zn(2+) as a cofactor.

Its subcellular location is the plastid. The protein localises to the chloroplast thylakoid membrane. Its function is as follows. Probable ATP-dependent zinc metallopeptidase. The sequence is that of ATP-dependent zinc metalloprotease FTSH, chloroplastic from Helianthus annuus (Common sunflower).